A 310-amino-acid chain; its full sequence is Homoserine kinase (310 aa).

Residue Pro91–Cys101 coordinates ATP.

Belongs to the GHMP kinase family. Homoserine kinase subfamily.

The protein resides in the cytoplasm. The enzyme catalyses L-homoserine + ATP = O-phospho-L-homoserine + ADP + H(+). It participates in amino-acid biosynthesis; L-threonine biosynthesis; L-threonine from L-aspartate: step 4/5. In terms of biological role, catalyzes the ATP-dependent phosphorylation of L-homoserine to L-homoserine phosphate. This Escherichia coli (strain SE11) protein is Homoserine kinase.